Reading from the N-terminus, the 865-residue chain is Alanine--tRNA ligase (865 aa).

Zn(2+)-binding residues include His-554, His-558, Cys-656, and His-660.

This sequence belongs to the class-II aminoacyl-tRNA synthetase family. Zn(2+) serves as cofactor.

The protein localises to the cytoplasm. The catalysed reaction is tRNA(Ala) + L-alanine + ATP = L-alanyl-tRNA(Ala) + AMP + diphosphate. Its function is as follows. Catalyzes the attachment of alanine to tRNA(Ala) in a two-step reaction: alanine is first activated by ATP to form Ala-AMP and then transferred to the acceptor end of tRNA(Ala). Also edits incorrectly charged Ser-tRNA(Ala) and Gly-tRNA(Ala) via its editing domain. The protein is Alanine--tRNA ligase of Francisella tularensis subsp. mediasiatica (strain FSC147).